The chain runs to 602 residues: VIN3-like protein 1 (602 aa).

The interval 1–38 (MDSSSTKSKISHSRKTNKKSNKKHESNGKQQQQQDVDG) is disordered. The segment covering 9–22 (KISHSRKTNKKSNK) has biased composition (basic residues). The PHD-type zinc-finger motif lies at 67–137 (RCSCCVCHNF…CFCCYSCGKV (71 aa)). The Nuclear localization signal motif lies at 144 to 151 (WKKQLVAA). The 99-residue stretch at 242-340 (VPAACRFHFE…AMCFTKSVEI (99 aa)) folds into the Fibronectin type-III domain. Positions 430 to 470 (LNEEFTPPDSSGGEDNGVPLNSLAEADGGDHDDNCDDAVSN) are disordered. Positions 502–602 (AISDSNDSEN…RPNNGVMTSH (101 aa)) are VIN3-Interacting Domain (VID).

Interacts with VIN3 and VIL2. The heterodimer made of VIN3 and VIL1 is required for establishing the vernalization-induced epigenetic silencing of FLC. Component of the plant homeodomain / polycomb repressive complex 2 (PHD-PRC2) large complex during prolonged cold, composed of core PRC2 components (VRN2, EZA1, FIE and MSI1), and three related PHD finger proteins (VIL1, VIL2 and VIN3) that mediates histone H3 trimethylation on 'Lys-27' (H3K27me3). Accumulates in shoot and root apices, and in leaves.

It is found in the nucleus. It localises to the nucleus speckle. Functionally, involved in both the vernalization and photoperiod pathways by regulating expression of the related floral repressors FLOWERING LOCUS C (FLC) and FLOWERING LOCUS M (FLM). Together with VIN3, required during vernalization for the modifications of FLC and FLM chromatin that are associated with an epigenetically silenced state (e.g. chromatin modifications, histone deacetylation, and trimethylated H3 'Lys-4' H3K4me3 and 'Lys-27' H3K27me3) and with acquisition of competence to flower. Promotes flowering in short days (SD=8 hours light/16 hours dark). Associates dynamically at FLC locus; during vernalization, binds to specific sites, but when in warm conditions, distributed along the whole locus. This Arabidopsis thaliana (Mouse-ear cress) protein is VIN3-like protein 1 (VIL1).